A 293-amino-acid chain; its full sequence is N-acetylneuraminate lyase (293 aa).

Ser48 and Ser49 together coordinate aceneuramate. Tyr137 serves as the catalytic Proton donor. The active-site Schiff-base intermediate with substrate is Lys165. 5 residues coordinate aceneuramate: Thr167, Gly189, Asp191, Glu192, and Ser208.

It belongs to the DapA family. NanA subfamily. As to quaternary structure, homotetramer.

The protein resides in the cytoplasm. It catalyses the reaction aceneuramate = aldehydo-N-acetyl-D-mannosamine + pyruvate. Its pathway is amino-sugar metabolism; N-acetylneuraminate degradation; D-fructose 6-phosphate from N-acetylneuraminate: step 1/5. Functionally, catalyzes the reversible aldol cleavage of N-acetylneuraminic acid (sialic acid; Neu5Ac) to form pyruvate and N-acetylmannosamine (ManNAc) via a Schiff base intermediate. The protein is N-acetylneuraminate lyase of Staphylococcus aureus (strain Mu3 / ATCC 700698).